A 1374-amino-acid chain; its full sequence is Mitogen-activated protein kinase kinase kinase 5 (1374 aa).

The interval 68-87 (PAATSSSSATRGRGSSVGGG) is disordered. Residues 69–81 (AATSSSSATRGRG) show a composition bias toward low complexity. An asymmetric dimethylarginine; by PRMT1 mark is found at R78 and R80. Position 83 is a phosphoserine; by PIM1 and PKB/AKT1 (S83). Positions 649 to 1374 (MVNTITEEKG…AIIDFRNKQT (726 aa)) are interaction with PPIA/CYPA. The region spanning 680-938 (NGDRVVLGKG…ANDLLVDEFL (259 aa)) is the Protein kinase domain. Residues 686 to 694 (LGKGTYGIV) and K709 contribute to the ATP site. Y718 is subject to Phosphotyrosine. D803 functions as the Proton acceptor in the catalytic mechanism. Residue T813 is modified to Phosphothreonine; by autocatalysis. T838 carries the phosphothreonine; by autocatalysis, MELK and MAP3K6 modification. T842 is subject to Phosphothreonine; by autocatalysis. S958 carries the post-translational modification Phosphoserine. Position 966 is a phosphoserine; by autocatalysis (S966). A phosphoserine mark is found at S1029 and S1033. A disordered region spans residues 1182 to 1209 (SESDTADQEDLDVEDDHEEQPSNQTVRR). Residues 1185–1199 (DTADQEDLDVEDDHE) are compositionally biased toward acidic residues. The stretch at 1245–1285 (LGRMKIETNRLLEELVRKEKELQALLHRAIEEKDQEIKHLK) forms a coiled coil.

It belongs to the protein kinase superfamily. STE Ser/Thr protein kinase family. MAP kinase kinase kinase subfamily. As to quaternary structure, homodimer when inactive. Binds both upstream activators and downstream substrates in multimolecular complexes. Part of a cytoplasmic complex made of HIPK1, DAB2IP and MAP3K5 in response to TNF. This complex formation promotes MAP3K5-JNK activation and subsequent apoptosis. Interacts with SOCS1 which recognizes phosphorylation of Tyr-718 and induces MAP3K5/ASK1 degradation in endothelial cells. Interacts with the 14-3-3 family proteins such as YWHAB, YWHAE, YWHAQ, YWHAH, YWHAZ and SFN. Interacts with ARRB2, BIRC2, DAB2IP, IGF1R, MAP3K6/ASK2, PGAM5, PIM1, PPP5C, SOCS1, STUB1, TRAF2, TRAF6 and TXN. Interacts with ERN1 in a TRAF2-dependent manner. Interacts with calcineurin subunit PPP3R1. Interacts with PPM1L. Interacts (via N-terminus) with RAF1 and this interaction inhibits the proapoptotic function of MAP3K5. Interacts with DAB2IP (via N-terminus C2 domain); the interaction occurs in a TNF-alpha-dependent manner. Interacts with DUSP13A; may positively regulate apoptosis. Interacts with DAXX. Interacts with RC3H2. Interacts with PPIA/CYPA. Interacts with PRMT1; the interaction results in MAP3K5 methylation by PRMT1 which inhibits MAP3K5 activation. Interacts with TRAF2; the interaction is inhibited by PRMT1. Interacts with TRIM48. In terms of assembly, (Microbial infection) Interacts with HIV-1 Nef; this interaction inhibits MAP3K5 signaling. Mg(2+) serves as cofactor. In terms of processing, phosphorylated at Thr-838 through autophosphorylation and by MAP3K6/ASK2 which leads to activation. Thr-838 is dephosphorylated by PPP5C. Ser-83 and Ser-1033 are inactivating phosphorylation sites, the former of which is phosphorylated by AKT1. Phosphorylated at Ser-966 which induces association of MAP3K5/ASK1 with the 14-3-3 family proteins and suppresses MAP3K5/ASK1 activity. Calcineurin (CN) dephosphorylates this site. Also dephosphorylated and activated by PGAM5. Phosphorylation at Ser-966 in response to oxidative stress is negatively regulated by PPIA/CYPA. Ubiquitinated. Tumor necrosis factor (TNF) induces TNFR2-dependent ubiquitination, leading to proteasomal degradation. Ubiquitinated by RC3H2 in a TRIM48-dependent manner. Post-translationally, methylation at Arg-78 and Arg-80 by PRMT1 promotes association of MAP3K5 with thioredoxin and negatively regulates MAP3K5 association with TRAF2, inhibiting MAP3K5 activation. Methylation is blocked by ubiquitination of PRMT1 by TRIM48. In terms of tissue distribution, abundantly expressed in heart and pancreas.

It localises to the cytoplasm. Its subcellular location is the endoplasmic reticulum. It catalyses the reaction L-seryl-[protein] + ATP = O-phospho-L-seryl-[protein] + ADP + H(+). The enzyme catalyses L-threonyl-[protein] + ATP = O-phospho-L-threonyl-[protein] + ADP + H(+). Activated by various stressors, including oxidative stress, endoplasmic reticulum stress, and calcium overload, as well as by receptor-mediated inflammatory signals, such as the tumor necrosis factor (TNF) and lipopolysaccharide (LPS). Homophilic association of MAP3K5/ASK1 through the C-terminal coiled-coil domains and the heteromeric complex formation of MAP3K5/ASK1 with the reduced form of thioredoxin (TXN), constitutes an inactive form of the kinase. Upon ROS-induced dissociation of TXN from MAP3K5/ASK1, TRAF2 and TRAF6 are reciprocally recruited to MAP3K5/ASK1 and form the active MAP3K5/ASK1 signalosome, in which TRAF2 and TRAF6 appear to facilitate the active configuration of MAP3K5/ASK1. MAP3K5/ASK1 activity is also regulated through several phosphorylation and dephosphorylation events. Thr-838 is an activating phosphorylation site that is autophosphorylated and phosphorylated by MAP3K6/ASK2 and dephosphorylated by PPP5C. Ser-83 and Ser-1033 are inactivating phosphorylation sites, the former of which is phosphorylated by AKT1. Phosphorylation of Ser-966 induces association of MAP3K5/ASK1 with the 14-3-3 family proteins, which suppresses MAP3K5/ASK1 activity. Calcium/calmodulin-activated protein phosphatase calcineurin (PPP3CA) has been shown to directly dephosphorylate this site. SOCS1 binds to ASK1 by recognizing phosphorylation of Tyr-718 and induces MAP3K5/ASK1 degradation in endothelial cells. Also dephosphorylated and activated by PGAM5. Contains an N-terminal autoinhibitory domain. Once activated targeted for proteasomal degradation by RC3H2-mediated ubiquitination. Serine/threonine kinase which acts as an essential component of the MAP kinase signal transduction pathway. Plays an important role in the cascades of cellular responses evoked by changes in the environment. Mediates signaling for determination of cell fate such as differentiation and survival. Plays a crucial role in the apoptosis signal transduction pathway through mitochondria-dependent caspase activation. MAP3K5/ASK1 is required for the innate immune response, which is essential for host defense against a wide range of pathogens. Mediates signal transduction of various stressors like oxidative stress as well as by receptor-mediated inflammatory signals, such as the tumor necrosis factor (TNF) or lipopolysaccharide (LPS). Once activated, acts as an upstream activator of the MKK/JNK signal transduction cascade and the p38 MAPK signal transduction cascade through the phosphorylation and activation of several MAP kinase kinases like MAP2K4/SEK1, MAP2K3/MKK3, MAP2K6/MKK6 and MAP2K7/MKK7. These MAP2Ks in turn activate p38 MAPKs and c-jun N-terminal kinases (JNKs). Both p38 MAPK and JNKs control the transcription factors activator protein-1 (AP-1). This Homo sapiens (Human) protein is Mitogen-activated protein kinase kinase kinase 5 (MAP3K5).